A 1906-amino-acid chain; its full sequence is Zinc metalloprotease ZmpB (1906 aa).

A signal peptide spans methionine 1–alanine 33. The propeptide occupies alanine 34–threonine 76. The short motif at leucine 73 to glycine 77 is the LPXTG sorting signal element. Threonine 76 is subject to Pentaglycyl murein peptidoglycan amidated threonine. The next 2 membrane-spanning stretches (helical) occupy residues glycine 77–tyrosine 98 and serine 105–alanine 127. The Extracellular segment spans residues threonine 128–lysine 1906. The interval valine 178–tyrosine 436 is disordered. Positions proline 181 to valine 196 are enriched in polar residues. Basic and acidic residues-rich tracts occupy residues glutamate 201–serine 239, valine 252–valine 262, lysine 271–threonine 335, lysine 352–glutamate 375, and glutamate 383–lysine 408. 4 repeat units span residues lysine 277 to glutamate 291, alanine 293 to lysine 315, lysine 361 to glutamate 375, and alanine 380 to lysine 402. The segment at lysine 277–glutamate 375 is 2 X 15 AA repeats of K-V-E-Q-A-G-E-P-V-A-P-R-E-D-E. Residues alanine 293 to glutamate 375 are 2 X 23 AA approximate repeats. Polar residues predominate over residues leucine 421 to tyrosine 436. Histidine 1562 provides a ligand contact to Zn(2+). The active site involves glutamate 1563. The Zn(2+) site is built by histidine 1566 and glutamate 1586.

This sequence belongs to the peptidase M26 family. It depends on Zn(2+) as a cofactor. In terms of processing, the Gram-positive cell-wall anchor motif LPXTG is located in the N-terminal part, in contrast to such motifs in other known streptococcal and staphylococcal proteins. The protease could be cleaved by the sortase and anchored in the membrane via the two potential N-terminal transmembrane domains, whereas the propeptide located prior to the LPXTG motif would remain attached to the cell wall peptidoglycan by an amide bond.

It is found in the secreted. The protein resides in the cell wall. It localises to the membrane. Functionally, is a virulence factor capable of inducing inflammation in the lower respiratory tract, by increasing tumor necrosis factor alpha (TNF-alpha) concentration in the lungs. Also appears to have other functions important in virulence in models of pneumonia and septicemia. The polypeptide is Zinc metalloprotease ZmpB (zmpB) (Streptococcus pneumoniae serotype 4 (strain ATCC BAA-334 / TIGR4)).